The chain runs to 121 residues: Non-structural protein 8 (121 aa).

The signal sequence occupies residues 1–15 (MKLLIVFGLLASVYC). The SARS ORF8 Ig-like domain occupies 19–121 (ECSIQECCEN…HDVRVVLDFI (103 aa)). Intrachain disulfides connect Cys-25/Cys-90, Cys-37/Cys-102, and Cys-61/Cys-83.

In Bat coronavirus HKU3 (BtCoV), this protein is Non-structural protein 8.